The following is a 214-amino-acid chain: Cytochrome c biogenesis ATP-binding export protein CcmA (214 aa).

In terms of domain architecture, ABC transporter spans 12 to 214; sequence LAAHDLAFSR…TRMLTLEVAA (203 aa). 44-51 contacts ATP; the sequence is GDNGAGKT.

It belongs to the ABC transporter superfamily. CcmA exporter (TC 3.A.1.107) family. In terms of assembly, the complex is composed of two ATP-binding proteins (CcmA) and two transmembrane proteins (CcmB).

The protein resides in the cell inner membrane. The enzyme catalyses heme b(in) + ATP + H2O = heme b(out) + ADP + phosphate + H(+). Its function is as follows. Part of the ABC transporter complex CcmAB involved in the biogenesis of c-type cytochromes; once thought to export heme, this seems not to be the case, but its exact role is uncertain. Responsible for energy coupling to the transport system. The polypeptide is Cytochrome c biogenesis ATP-binding export protein CcmA (Xanthomonas axonopodis pv. citri (strain 306)).